A 493-amino-acid polypeptide reads, in one-letter code: Guanosine-5'-triphosphate,3'-diphosphate pyrophosphatase (493 aa).

Belongs to the GppA/Ppx family. GppA subfamily.

The enzyme catalyses guanosine 3'-diphosphate 5'-triphosphate + H2O = guanosine 3',5'-bis(diphosphate) + phosphate + H(+). Its pathway is purine metabolism; ppGpp biosynthesis; ppGpp from GTP: step 2/2. In terms of biological role, catalyzes the conversion of pppGpp to ppGpp. Guanosine pentaphosphate (pppGpp) is a cytoplasmic signaling molecule which together with ppGpp controls the 'stringent response', an adaptive process that allows bacteria to respond to amino acid starvation, resulting in the coordinated regulation of numerous cellular activities. The protein is Guanosine-5'-triphosphate,3'-diphosphate pyrophosphatase of Salmonella dublin (strain CT_02021853).